Here is a 232-residue protein sequence, read N- to C-terminus: EEF1A lysine methyltransferase 3 (232 aa).

S-adenosyl-L-methionine-binding positions include tryptophan 57, 83-85 (GAG), aspartate 104, tryptophan 133, and alanine 150.

This sequence belongs to the methyltransferase superfamily. METTL21 family. Interacts with members of the heat shock protein 70 and 90 families and of the TCP-1 chaperonin family, as well as with HSPD1, STIP1 and tubulin; at least some of these proteins may be methylation substrates.

Its subcellular location is the cytoplasm. The protein localises to the cytoskeleton. It localises to the microtubule organizing center. It is found in the centrosome. It catalyses the reaction L-lysyl-[protein] + 3 S-adenosyl-L-methionine = N(6),N(6),N(6)-trimethyl-L-lysyl-[protein] + 3 S-adenosyl-L-homocysteine + 3 H(+). The catalysed reaction is L-lysyl-[protein] + S-adenosyl-L-methionine = N(6)-methyl-L-lysyl-[protein] + S-adenosyl-L-homocysteine + H(+). The enzyme catalyses N(6)-methyl-L-lysyl-[protein] + S-adenosyl-L-methionine = N(6),N(6)-dimethyl-L-lysyl-[protein] + S-adenosyl-L-homocysteine + H(+). It carries out the reaction N(6),N(6)-dimethyl-L-lysyl-[protein] + S-adenosyl-L-methionine = N(6),N(6),N(6)-trimethyl-L-lysyl-[protein] + S-adenosyl-L-homocysteine + H(+). Its function is as follows. Protein-lysine methyltransferase that selectively mono-, di- and trimethylates 'Lys-165' of the translation elongation factors EEF1A1 and EEF1A2 in an aminoacyl-tRNA and GTP-dependent manner. EEF1A1 methylation by EEF1AKMT3 is dynamic as well as inducible by stress conditions, such as ER-stress, and plays a regulatory role on mRNA translation. This chain is EEF1A lysine methyltransferase 3, found in Mus musculus (Mouse).